Reading from the N-terminus, the 534-residue chain is Glucans biosynthesis protein D (534 aa).

A signal peptide (tat-type signal) is located at residues 1 to 28; that stretch reads MYRRDFLKSVTAAWVAFGLPNPLGGAFA.

Belongs to the OpgD/OpgG family. Predicted to be exported by the Tat system. The position of the signal peptide cleavage has not been experimentally proven.

Its subcellular location is the periplasm. The protein operates within glycan metabolism; osmoregulated periplasmic glucan (OPG) biosynthesis. Probably involved in the control of the structural glucose backbone of osmoregulated periplasmic glucans (OPGs). The protein is Glucans biosynthesis protein D of Xylella fastidiosa (strain M23).